We begin with the raw amino-acid sequence, 66 residues long: MSRTSIILVLAIFVAIAAIAQCRNIQYDVDEISPEAAFRYAQWGEIPHKRVPSAGDMMVRFGKRSV.

A signal peptide spans 1-22; sequence MSRTSIILVLAIFVAIAAIAQC. A propeptide spanning residues 23-48 is cleaved from the precursor; that stretch reads RNIQYDVDEISPEAAFRYAQWGEIPH. A Phenylalanine amide modification is found at Phe-61. A propeptide spanning residues 65–66 is cleaved from the precursor; sequence SV.

The protein belongs to the FARP (FMRFamide related peptide) family.

The protein localises to the secreted. In terms of biological role, FMRFamides and FMRFamide-like peptides are neuropeptides. The sequence is that of FMRFamide-like neuropeptides 24 from Caenorhabditis briggsae.